The primary structure comprises 341 residues: Solute carrier family 25 member 43 (341 aa).

3 Solcar repeats span residues Thr-11–Leu-101, Ser-105–Tyr-185, and Ser-200–Asn-298. A run of 6 helical transmembrane segments spans residues Leu-16–Ala-36, Leu-68–Ala-88, Ile-110–Ile-130, Gly-166–Met-186, Phe-205–Val-225, and Val-262–Ile-282.

It belongs to the mitochondrial carrier (TC 2.A.29) family.

Its subcellular location is the mitochondrion inner membrane. The sequence is that of Solute carrier family 25 member 43 (SLC25A43) from Homo sapiens (Human).